Consider the following 487-residue polypeptide: Histamine H1 receptor (487 aa).

The Extracellular portion of the chain corresponds to 1 to 29; the sequence is MSLPNSSCLLEDKMCEGNKTTMASPQLMP. N-linked (GlcNAc...) asparagine glycans are attached at residues Asn5 and Asn18. A helical membrane pass occupies residues 30–50; it reads LVVVLSTISLVTVGLNLLVLY. Over 51–64 the chain is Cytoplasmic; the sequence is AVRSERKLHTVGNL. Residues 65–89 traverse the membrane as a helical segment; it reads YIVSLSVADLIVGAVVMPMNILYLL. Residues 90-97 lie on the Extracellular side of the membrane; sequence MSKWSLGR. The helical transmembrane segment at 98-123 threads the bilayer; sequence PLCLFWLSMDYVASTASIFSVFILCI. An intrachain disulfide couples Cys100 to Cys180. Histamine contacts are provided by Asp107 and Thr112. The important for agonist binding stretch occupies residues 107–112; that stretch reads DYVAST. The Cytoplasmic segment spans residues 124-144; it reads DRYRSVQQPLRYLKYRTKTRA. Phosphothreonine occurs at positions 140 and 142. Residues 145 to 164 form a helical membrane-spanning segment; it reads SATILGAWFLSFLWVIPILG. Residues 165–188 are Extracellular-facing; the sequence is WNHFRQQISVRREDKCETDFYDVT. Residues 189-211 traverse the membrane as a helical segment; that stretch reads WFKVMTAIINFYLPTLLMLWFYA. Residue Asn198 participates in histamine binding. Residues 212-416 are Cytoplasmic-facing; it reads KIYKAVQKHC…MNRERKAAKQ (205 aa). The residue at position 230 (Ser230) is a Phosphoserine. Over residues 238-261 the composition is skewed to basic and acidic residues; it reads KLRPENPKGDAKKPGKESPWEVLK. The disordered stretch occupies residues 238–286; that stretch reads KLRPENPKGDAKKPGKESPWEVLKRKPKDAGGGSVLKSPSQTPKEMKSP. Thr279 carries the phosphothreonine modification. Residues Ser344 and Ser347 each carry the phosphoserine modification. The disordered stretch occupies residues 345-379; the sequence is EISEDQMLGDSQSFSRTDSDTTTETAPGKGKLRSG. Residues 353–369 are compositionally biased toward polar residues; sequence GDSQSFSRTDSDTTTET. Ser380, Ser396, and Ser398 each carry phosphoserine. A helical membrane pass occupies residues 417–440; that stretch reads LGFIMAAFILCWIPYFIFFMVIAF. The segment at 424-428 is important for agonist binding; the sequence is FILCW. Tyr431 contributes to the histamine binding site. Cys441 and Cys444 are oxidised to a cystine. Residues 441 to 446 lie on the Extracellular side of the membrane; sequence CKNCCN. A helical membrane pass occupies residues 447 to 469; the sequence is EHLHMFTIWLGYINSTLNPLIYP. The Cytoplasmic segment spans residues 470-487; it reads LCNENFKKTFKRILHIRS.

This sequence belongs to the G-protein coupled receptor 1 family. Post-translationally, phosphorylation at sites in the second and third cytoplasmic loops independently contribute to agonist-induced receptor down-regulation.

Its subcellular location is the cell membrane. G-protein-coupled receptor for histamine, a biogenic amine that functions as an immune modulator and a neurotransmitter. Through the H1 receptor, histamine mediates the contraction of smooth muscles and increases capillary permeability due to contraction of terminal venules. Also mediates neurotransmission in the central nervous system and thereby regulates circadian rhythms, emotional and locomotor activities as well as cognitive functions. This Pongo pygmaeus (Bornean orangutan) protein is Histamine H1 receptor.